Here is a 444-residue protein sequence, read N- to C-terminus: MNAPTKDQSLRNLQKGGELCGKVKVPGDKSISHRALLFGAIAKGKTLIEGLLPAEDPLSTAECLRSMGVKISPIKKGDIIEIEGVGLNGLQEPQDILNCGNSGTTMRLIMGLLAGQKDHHFILTGDKSLRNRPMKRVGQPLKMMGAKVFGRCGGNLAPLSIIGNKLRGAVIGTPVASAQIKSAILLAALNAEGSTTVIEPARSRDHSERMLKAFGANLEVGGEMGRHITVSPGKDLKGQSIIVPGDISSAAFWLIAGSIIPGSELVVENVGLNPTRTGILDVLEEMEANINVINKRDVAGEPVGDIEVFYKENLKPFKIDGEIMPRLVDEIPILSVGACFCNGISQIKGASELRVKETDRLAVMARQLKRMGASVDEHQDGLTIYGGKSLEGCELDSEDDHRIAMSLAIASIMANSNSTLRRSEAAAISYPDFWSDLKRLQQKN.

K29, S30, and R34 together coordinate 3-phosphoshikimate. K29 is a phosphoenolpyruvate binding site. Phosphoenolpyruvate contacts are provided by G103 and R132. Positions 177, 179, 329, and 356 each coordinate 3-phosphoshikimate. Q179 serves as a coordination point for phosphoenolpyruvate. Catalysis depends on D329, which acts as the Proton acceptor. R360 and R402 together coordinate phosphoenolpyruvate.

The protein belongs to the EPSP synthase family. As to quaternary structure, monomer.

The protein localises to the cytoplasm. The catalysed reaction is 3-phosphoshikimate + phosphoenolpyruvate = 5-O-(1-carboxyvinyl)-3-phosphoshikimate + phosphate. It functions in the pathway metabolic intermediate biosynthesis; chorismate biosynthesis; chorismate from D-erythrose 4-phosphate and phosphoenolpyruvate: step 6/7. In terms of biological role, catalyzes the transfer of the enolpyruvyl moiety of phosphoenolpyruvate (PEP) to the 5-hydroxyl of shikimate-3-phosphate (S3P) to produce enolpyruvyl shikimate-3-phosphate and inorganic phosphate. The chain is 3-phosphoshikimate 1-carboxyvinyltransferase from Prochlorococcus marinus (strain NATL2A).